Reading from the N-terminus, the 103-residue chain is uncharacterized protein (103 aa).

Residues 1-22 (MFRPFLNSLMLGSLFFPFIAIA) form the signal peptide.

This sequence to the N-terminal of the FimA/PapA family of fimbria proteins.

This is an uncharacterized protein from Escherichia coli (strain K12).